The primary structure comprises 400 residues: Argininosuccinate synthase (400 aa).

ATP-binding positions include 6–14 and Ala-33; that span reads AYSGGLDTS. L-citrulline is bound by residues Tyr-84 and Ser-89. Position 114 (Gly-114) interacts with ATP. Residues Thr-116, Asn-120, and Asp-121 each contribute to the L-aspartate site. Asn-120 provides a ligand contact to L-citrulline. Residues Arg-124, Ser-173, Ser-182, Glu-258, and Tyr-270 each coordinate L-citrulline.

It belongs to the argininosuccinate synthase family. Type 1 subfamily. In terms of assembly, homotetramer.

It is found in the cytoplasm. It carries out the reaction L-citrulline + L-aspartate + ATP = 2-(N(omega)-L-arginino)succinate + AMP + diphosphate + H(+). It participates in amino-acid biosynthesis; L-arginine biosynthesis; L-arginine from L-ornithine and carbamoyl phosphate: step 2/3. This Thermus thermophilus (strain ATCC 27634 / DSM 579 / HB8) protein is Argininosuccinate synthase.